Reading from the N-terminus, the 388-residue chain is Chorismate synthase (388 aa).

2 residues coordinate NADP(+): Arg39 and Arg45. Residues 130 to 132, 251 to 252, Ala296, 311 to 315, and Arg337 contribute to the FMN site; these read RSS, NA, and KPIPT.

Belongs to the chorismate synthase family. As to quaternary structure, homotetramer. The cofactor is FMNH2.

The catalysed reaction is 5-O-(1-carboxyvinyl)-3-phosphoshikimate = chorismate + phosphate. Its pathway is metabolic intermediate biosynthesis; chorismate biosynthesis; chorismate from D-erythrose 4-phosphate and phosphoenolpyruvate: step 7/7. Its function is as follows. Catalyzes the anti-1,4-elimination of the C-3 phosphate and the C-6 proR hydrogen from 5-enolpyruvylshikimate-3-phosphate (EPSP) to yield chorismate, which is the branch point compound that serves as the starting substrate for the three terminal pathways of aromatic amino acid biosynthesis. This reaction introduces a second double bond into the aromatic ring system. The protein is Chorismate synthase of Streptococcus equi subsp. equi (strain 4047).